The primary structure comprises 289 residues: MEVKPFLKWAGGKTQILSQIEENLPKELKEGNIKKYIEPFVGGGAVLFYLLQKYEFKKVIISDINEDLMLCYKVVKNDVDRLIEELSSLRDEFLSLDEEKRKEFYYKVRDDFNKNKNDCDEVKRVAQFIFLNKTCYNGLYRVNKKGEFNVPYGRYKNPKIFDEQNLKNVSKLLKNVKILCGDFEIVDEYVDAESFVYFDPPYKPLNKTSSFTSYTKYDFNDDDQIRLAKFYRKLDKRGAKLMLSNSYNVDFFGKLYEGFNIKKVVAKRMINCKGDKRKDGIYELLIMNY.

S-adenosyl-L-methionine contacts are provided by tryptophan 9, lysine 13, aspartate 63, and aspartate 199.

This sequence belongs to the N(4)/N(6)-methyltransferase family.

The catalysed reaction is a 2'-deoxyadenosine in DNA + S-adenosyl-L-methionine = an N(6)-methyl-2'-deoxyadenosine in DNA + S-adenosyl-L-homocysteine + H(+). Its function is as follows. An alpha subtype methylase that recognizes the double-stranded sequence 5'-GATC-3', methylates A-2 on both strands, and protects the DNA from cleavage by the MjaIII endonuclease. The chain is Type II methyltransferase M.MjaIII (mjaIIIM) from Methanocaldococcus jannaschii (strain ATCC 43067 / DSM 2661 / JAL-1 / JCM 10045 / NBRC 100440) (Methanococcus jannaschii).